The chain runs to 630 residues: Differentially expressed in FDCP 6 (630 aa).

The residue at position 210 (tyrosine 210) is a Phosphotyrosine. In terms of domain architecture, PH spans 216-312 (DVLKQGYLWK…WTAAIQTAIR (97 aa)). The residue at position 225 (lysine 225) is an N6-acetyllysine. Disordered regions lie at residues 318–341 (KTSL…RRRA), 378–418 (LQEE…ELKK), and 552–630 (HPIE…APGN). Basic and acidic residues-rich tracts occupy residues 331–341 (EQREQRERRRA) and 378–392 (LQEE…HKEL). Polar residues predominate over residues 588-606 (WGSQGNRTLSVNSSEQKSL). A Phosphoserine modification is found at serine 590. The span at 620–630 (QEEKLDPAPGN) shows a compositional bias: basic and acidic residues.

In terms of assembly, interacts with IRF4, activated RAC1 and F-actin. Both the phosphorylated and non-phosphorylated forms bind phosphatidylinositol 3,4,5-trisphosphate (PtdInsP3). Interacts with ZAP70. Interacts with RAB11A. Tyrosine-phosphorylated by tyrosine-protein kinase LCK in response to T-cell activation. Thymus.

Its subcellular location is the cytoplasm. The protein resides in the cell membrane. It is found in the nucleus. It localises to the cytoskeleton. The protein localises to the perinuclear region. Its subcellular location is the cell projection. The protein resides in the filopodium. In terms of biological role, phosphatidylinositol 3,4,5-trisphosphate-dependent guanine nucleotide exchange factor (GEF) which plays a role in the activation of Rho GTPases RAC1, RhoA and CDC42. Can regulate cell morphology in cooperation with activated RAC1. Involved in immune homeostasis by ensuring proper trafficking and availability of T-cell regulator CTLA-4 at T-cell surface. Plays a role in Th2 (T helper cells) development and/or activation, perhaps by interfering with ZAP70 signaling. Required for optimal T-cell effector function, lymphocyte homeostasis and the prevention of systemic autoimmunity. The sequence is that of Differentially expressed in FDCP 6 (Def6) from Mus musculus (Mouse).